The primary structure comprises 417 residues: Serine--tRNA ligase (417 aa).

226–228 (TSE) serves as a coordination point for L-serine. ATP-binding positions include 257-259 (RRE) and Val273. Position 280 (Glu280) interacts with L-serine. 344–347 (EVTS) provides a ligand contact to ATP. Residue Thr379 participates in L-serine binding.

Belongs to the class-II aminoacyl-tRNA synthetase family. Type-1 seryl-tRNA synthetase subfamily. As to quaternary structure, homodimer. The tRNA molecule binds across the dimer.

The protein localises to the cytoplasm. It carries out the reaction tRNA(Ser) + L-serine + ATP = L-seryl-tRNA(Ser) + AMP + diphosphate + H(+). It catalyses the reaction tRNA(Sec) + L-serine + ATP = L-seryl-tRNA(Sec) + AMP + diphosphate + H(+). Its pathway is aminoacyl-tRNA biosynthesis; selenocysteinyl-tRNA(Sec) biosynthesis; L-seryl-tRNA(Sec) from L-serine and tRNA(Sec): step 1/1. Its function is as follows. Catalyzes the attachment of serine to tRNA(Ser). Is also able to aminoacylate tRNA(Sec) with serine, to form the misacylated tRNA L-seryl-tRNA(Sec), which will be further converted into selenocysteinyl-tRNA(Sec). This chain is Serine--tRNA ligase, found in Tropheryma whipplei (strain TW08/27) (Whipple's bacillus).